Reading from the N-terminus, the 241-residue chain is Prolactin-8A8 (241 aa).

Residues 1–30 form the signal peptide; sequence MELQFRQPHFSDALLLLLLSNLLLWEKASS. Cystine bridges form between Cys34-Cys41, Cys101-Cys217, and Cys234-Cys241. An N-linked (GlcNAc...) asparagine glycan is attached at Asn213.

Belongs to the somatotropin/prolactin family. As to expression, expressed specifically in the placenta. Predominantly expressed in spongiotrophoblast cells.

The protein localises to the secreted. The sequence is that of Prolactin-8A8 (Prl8a8) from Mus musculus (Mouse).